Reading from the N-terminus, the 272-residue chain is uncharacterized protein (272 aa).

The region spanning 1–27 (MDTLAFINRALVEEGYSLKDIKLVLIT) is the HTH merR-type domain.

This is an uncharacterized protein from Aquifex aeolicus (strain VF5).